The primary structure comprises 207 residues: Ribonuclease HII (207 aa).

One can recognise an RNase H type-2 domain in the interval 20–207 (QLFAGVDEVG…KPVKRVLGIE (188 aa)). Residues Asp-26, Glu-27, and Asp-118 each coordinate a divalent metal cation.

The protein belongs to the RNase HII family. Requires Mn(2+) as cofactor. The cofactor is Mg(2+).

The protein localises to the cytoplasm. It catalyses the reaction Endonucleolytic cleavage to 5'-phosphomonoester.. Endonuclease that specifically degrades the RNA of RNA-DNA hybrids. This Aliivibrio fischeri (strain ATCC 700601 / ES114) (Vibrio fischeri) protein is Ribonuclease HII.